A 222-amino-acid chain; its full sequence is Germin-like protein 11-1 (222 aa).

Residues 1-23 form the signal peptide; sequence MKLSTVLCCYLLLLGLFAPEIIS. C32 and C49 are disulfide-bonded. Positions 72-195 constitute a Cupin type-1 domain; it reads DNMVRSSANI…AMFAPDSEVA (124 aa). Residues H111, H113, E118, and H157 each contribute to the Mn(2+) site.

This sequence belongs to the germin family. In terms of assembly, oligomer (believed to be a pentamer but probably hexamer).

It is found in the secreted. Its subcellular location is the extracellular space. The protein resides in the apoplast. Functionally, may play a role in plant defense. Probably has no oxalate oxidase activity even if the active site is conserved. This chain is Germin-like protein 11-1, found in Oryza sativa subsp. japonica (Rice).